The primary structure comprises 326 residues: Flap endonuclease 1 (326 aa).

The N-domain stretch occupies residues 1 to 100 (MGNADLRSLA…DEVEKRREQR (100 aa)). Positions 28, 82, 154, 156, 175, 177, and 225 each coordinate Mg(2+). An I-domain region spans residues 118-246 (RVAKLDSRTQ…TAVKDLHEHG (129 aa)). Residues 318–326 (VQTGLDRWA) are interaction with PCNA.

The protein belongs to the XPG/RAD2 endonuclease family. FEN1 subfamily. In terms of assembly, interacts with PCNA. PCNA stimulates the nuclease activity without altering cleavage specificity. It depends on Mg(2+) as a cofactor.

In terms of biological role, structure-specific nuclease with 5'-flap endonuclease and 5'-3' exonuclease activities involved in DNA replication and repair. During DNA replication, cleaves the 5'-overhanging flap structure that is generated by displacement synthesis when DNA polymerase encounters the 5'-end of a downstream Okazaki fragment. Binds the unpaired 3'-DNA end and kinks the DNA to facilitate 5' cleavage specificity. Cleaves one nucleotide into the double-stranded DNA from the junction in flap DNA, leaving a nick for ligation. Also involved in the base excision repair (BER) pathway. Acts as a genome stabilization factor that prevents flaps from equilibrating into structures that lead to duplications and deletions. Also possesses 5'-3' exonuclease activity on nicked or gapped double-stranded DNA. This chain is Flap endonuclease 1, found in Haloarcula marismortui (strain ATCC 43049 / DSM 3752 / JCM 8966 / VKM B-1809) (Halobacterium marismortui).